The primary structure comprises 557 residues: uncharacterized protein (557 aa).

The first 30 residues, 1-30, serve as a signal peptide directing secretion; it reads MAPRRRRHTRIAGLRVVGTATLVAATTLTA. Cys-31 carries the N-palmitoyl cysteine lipid modification. Cys-31 is lipidated: S-diacylglycerol cysteine.

It to M.bovis Mb2616c and M.leprae ML0489.

The protein localises to the cell membrane. This is an uncharacterized protein from Mycobacterium tuberculosis (strain ATCC 25618 / H37Rv).